An 88-amino-acid chain; its full sequence is Putative sulfur carrier protein AF_0552 (88 aa).

It belongs to the sulfur carrier protein CysO family.

This is Putative sulfur carrier protein AF_0552 from Archaeoglobus fulgidus (strain ATCC 49558 / DSM 4304 / JCM 9628 / NBRC 100126 / VC-16).